A 340-amino-acid chain; its full sequence is Glycerol-3-phosphate dehydrogenase [NAD(P)+] (340 aa).

Residues Ser-11, Trp-12, Arg-33, and Lys-106 each contribute to the NADPH site. Residues Lys-106, Gly-137, and Ser-139 each contribute to the sn-glycerol 3-phosphate site. Position 141 (Ala-141) interacts with NADPH. Residues Lys-192, Asp-245, Ser-255, Arg-256, and Asn-257 each coordinate sn-glycerol 3-phosphate. Lys-192 serves as the catalytic Proton acceptor. Arg-256 lines the NADPH pocket. Positions 280 and 282 each coordinate NADPH.

The protein belongs to the NAD-dependent glycerol-3-phosphate dehydrogenase family.

It localises to the cytoplasm. The catalysed reaction is sn-glycerol 3-phosphate + NAD(+) = dihydroxyacetone phosphate + NADH + H(+). It carries out the reaction sn-glycerol 3-phosphate + NADP(+) = dihydroxyacetone phosphate + NADPH + H(+). It participates in membrane lipid metabolism; glycerophospholipid metabolism. In terms of biological role, catalyzes the reduction of the glycolytic intermediate dihydroxyacetone phosphate (DHAP) to sn-glycerol 3-phosphate (G3P), the key precursor for phospholipid synthesis. This chain is Glycerol-3-phosphate dehydrogenase [NAD(P)+], found in Bacillus cereus (strain ATCC 10987 / NRS 248).